The sequence spans 32 residues: Cyclotide glopa B (32 aa).

A cross-link (cyclopeptide (Gly-Asn)) is located at residues 1-32 (GGSVPCIETCVWTGCFLVPGCSCKSDKKCYLN). Intrachain disulfides connect cysteine 6–cysteine 21, cysteine 10–cysteine 23, and cysteine 15–cysteine 29.

This is a cyclic peptide.

In terms of biological role, probably participates in a plant defense mechanism. This chain is Cyclotide glopa B, found in Gloeospermum pauciflorum.